A 237-amino-acid polypeptide reads, in one-letter code: 2,3-bisphosphoglycerate-dependent phosphoglycerate mutase (237 aa).

Substrate contacts are provided by residues 8 to 15 (RHGQSQWN), 21 to 22 (TG), arginine 60, 87 to 90 (ERHY), lysine 98, 114 to 115 (RR), and 180 to 181 (GN). Histidine 9 serves as the catalytic Tele-phosphohistidine intermediate. The active-site Proton donor/acceptor is the glutamate 87.

This sequence belongs to the phosphoglycerate mutase family. BPG-dependent PGAM subfamily. In terms of assembly, homodimer.

The enzyme catalyses (2R)-2-phosphoglycerate = (2R)-3-phosphoglycerate. It participates in carbohydrate degradation; glycolysis; pyruvate from D-glyceraldehyde 3-phosphate: step 3/5. Catalyzes the interconversion of 2-phosphoglycerate and 3-phosphoglycerate. This is 2,3-bisphosphoglycerate-dependent phosphoglycerate mutase from Caulobacter sp. (strain K31).